The chain runs to 175 residues: Protein LAZY 3 (175 aa).

A disordered region spans residues 9 to 39; it reads RKLSGKKRVPTSDSSQEPSSPPLSKEVQGLP. Positions 44–50 match the IGT motif motif; that stretch reads TFLAIGT.

This sequence belongs to the LAZY family. Specifically expressed in roots. Expressed in root tips of young seedlings.

Functionally, involved in the regulation of root gravitropism. Functions redundantly with LAZY2 and LAZY4 in the control of root gravitropism. Functions redundantly with LAZY1, LAZY2 and LAZY4 to control plant architecture by coupling gravity sensing to the formation of auxin gradients. The sequence is that of Protein LAZY 3 from Arabidopsis thaliana (Mouse-ear cress).